The sequence spans 301 residues: tRNA-cytidine(32) 2-sulfurtransferase (301 aa).

Residues 47–52 carry the PP-loop motif motif; sequence SGGKDS. Residues Cys122, Cys125, and Cys213 each contribute to the [4Fe-4S] cluster site.

It belongs to the TtcA family. Homodimer. The cofactor is Mg(2+). [4Fe-4S] cluster is required as a cofactor.

Its subcellular location is the cytoplasm. The enzyme catalyses cytidine(32) in tRNA + S-sulfanyl-L-cysteinyl-[cysteine desulfurase] + AH2 + ATP = 2-thiocytidine(32) in tRNA + L-cysteinyl-[cysteine desulfurase] + A + AMP + diphosphate + H(+). It functions in the pathway tRNA modification. Catalyzes the ATP-dependent 2-thiolation of cytidine in position 32 of tRNA, to form 2-thiocytidine (s(2)C32). The sulfur atoms are provided by the cysteine/cysteine desulfurase (IscS) system. The sequence is that of tRNA-cytidine(32) 2-sulfurtransferase from Photobacterium profundum (strain SS9).